A 121-amino-acid chain; its full sequence is Small ribosomal subunit protein eS24 (121 aa).

Belongs to the eukaryotic ribosomal protein eS24 family.

This is Small ribosomal subunit protein eS24 from Pyrobaculum aerophilum (strain ATCC 51768 / DSM 7523 / JCM 9630 / CIP 104966 / NBRC 100827 / IM2).